Consider the following 676-residue polypeptide: MATSQRKILVTSALPYANGPIHLGHMLEYIQTDIWSRYQKLRGHECHYICADDAHGTPIMLKAQQLGMAPEEMIAQVNKEHQQDFADFNIAFDNYHSTHSEENRVLASDIYLKLRANGYIKSKSISQLFDPEKSMFLPDRFVKGTCPKCKSPDQYGDNCDACGATYSPTELINPKSAVSGATPVMKDTEHFFFDLPAFEDMLKEWTRSGALQTEMANKLDEWFEQGLQQWDITRDAPYFGFEIPDAPGKYFYVWLDAPIGYMGSFKNLCDKRPELSFDEFWAKDSKAEVYHFIGKDIVYFHSLFWPAMLHGSGYRQPNSVYAHGYVTVNGAKMSKSKGTFIKARTYLDHLDPEYLRYYYAAKLSSRIDDLDLNLEDFAQRVNSDLVGKLVNLASRTAGFITKRFDGKLAKIADTTLTDAFLAKQEQIAEFYETREYGKAMREIMALADIANGFVADAAPWQLVKQDDQQEVAHQVCSNALNLFRILVTYLKPVLPRLAQDVEAFFQQTLTWDGLGQDMAGHEIAPFKAMMQRVEFDKVEAMVADSKENLQATSEPEAPKGPLATDPISDTINFDDFAKIDLRIARIVKAEHVAEADKLLKLQLDIGGETRQVFAGIKSAYSPEDLEGKLTVMVANLAPRKMRFGMSEGMVLAAGPGGSDLWILEPHEGAQPGMRVK.

The short motif at Pro-15–His-25 is the 'HIGH' region element. Residues Cys-146, Cys-149, Cys-159, and Cys-162 each coordinate Zn(2+). A 'KMSKS' region motif is present at residues Lys-332–Ser-336. Residue Lys-335 coordinates ATP. The region spanning Asp-575 to Lys-676 is the tRNA-binding domain.

It belongs to the class-I aminoacyl-tRNA synthetase family. MetG type 1 subfamily. In terms of assembly, homodimer. It depends on Zn(2+) as a cofactor.

The protein localises to the cytoplasm. The catalysed reaction is tRNA(Met) + L-methionine + ATP = L-methionyl-tRNA(Met) + AMP + diphosphate. Functionally, is required not only for elongation of protein synthesis but also for the initiation of all mRNA translation through initiator tRNA(fMet) aminoacylation. In Shewanella sp. (strain MR-4), this protein is Methionine--tRNA ligase.